The sequence spans 472 residues: ATP synthase subunit beta (472 aa).

156-163 is a binding site for ATP; that stretch reads GGAGVGKT.

It belongs to the ATPase alpha/beta chains family. As to quaternary structure, F-type ATPases have 2 components, CF(1) - the catalytic core - and CF(0) - the membrane proton channel. CF(1) has five subunits: alpha(3), beta(3), gamma(1), delta(1), epsilon(1). CF(0) has three main subunits: a(1), b(2) and c(9-12). The alpha and beta chains form an alternating ring which encloses part of the gamma chain. CF(1) is attached to CF(0) by a central stalk formed by the gamma and epsilon chains, while a peripheral stalk is formed by the delta and b chains.

The protein localises to the cell membrane. It catalyses the reaction ATP + H2O + 4 H(+)(in) = ADP + phosphate + 5 H(+)(out). Produces ATP from ADP in the presence of a proton gradient across the membrane. The catalytic sites are hosted primarily by the beta subunits. The chain is ATP synthase subunit beta from Symbiobacterium thermophilum (strain DSM 24528 / JCM 14929 / IAM 14863 / T).